We begin with the raw amino-acid sequence, 110 residues long: UPF0122 protein YlxM (110 aa).

Belongs to the UPF0122 family.

In terms of biological role, might take part in the signal recognition particle (SRP) pathway. This is inferred from the conservation of its genetic proximity to ftsY/ffh. May be a regulatory protein. This Bacillus subtilis (strain 168) protein is UPF0122 protein YlxM (ylxM).